We begin with the raw amino-acid sequence, 188 residues long: Peptidyl-tRNA hydrolase (188 aa).

A tRNA-binding site is contributed by Y14. H19 functions as the Proton acceptor in the catalytic mechanism. TRNA contacts are provided by Y64, N66, and N113.

The protein belongs to the PTH family. Monomer.

Its subcellular location is the cytoplasm. It carries out the reaction an N-acyl-L-alpha-aminoacyl-tRNA + H2O = an N-acyl-L-amino acid + a tRNA + H(+). Hydrolyzes ribosome-free peptidyl-tRNAs (with 1 or more amino acids incorporated), which drop off the ribosome during protein synthesis, or as a result of ribosome stalling. In terms of biological role, catalyzes the release of premature peptidyl moieties from peptidyl-tRNA molecules trapped in stalled 50S ribosomal subunits, and thus maintains levels of free tRNAs and 50S ribosomes. The sequence is that of Peptidyl-tRNA hydrolase from Chloroflexus aggregans (strain MD-66 / DSM 9485).